Consider the following 913-residue polypeptide: Striatin-interacting protein homolog (913 aa).

Low complexity-rich tracts occupy residues 177–188, 195–204, and 791–811; these read QQQQQQQQNENE, TNFTTTTTTT, and NNNN…NNDN. Disordered stretches follow at residues 177–204 and 791–814; these read QQQQ…TTTT and NNNN…NGLT.

The protein belongs to the STRIP family.

The polypeptide is Striatin-interacting protein homolog (fam40) (Dictyostelium discoideum (Social amoeba)).